The primary structure comprises 556 residues: Formate--tetrahydrofolate ligase (556 aa).

65 to 72 is a binding site for ATP; that stretch reads TPAGEGKS.

The protein belongs to the formate--tetrahydrofolate ligase family.

It catalyses the reaction (6S)-5,6,7,8-tetrahydrofolate + formate + ATP = (6R)-10-formyltetrahydrofolate + ADP + phosphate. The protein operates within one-carbon metabolism; tetrahydrofolate interconversion. This Natranaerobius thermophilus (strain ATCC BAA-1301 / DSM 18059 / JW/NM-WN-LF) protein is Formate--tetrahydrofolate ligase.